The sequence spans 156 residues: Oxidized purine nucleoside triphosphate hydrolase (156 aa).

Positions T3 to K132 constitute a Nudix hydrolase domain. T8 contributes to the 2-oxo-dATP binding site. 8-oxo-dGTP is bound by residues T8, K23, N33, F35–K38, and E52. Residues N33 and F35–K38 contribute to the 2-oxo-dATP site. Mg(2+) is bound by residues G36, E52, E55, E56, and E100. The Nudix box signature appears at G37 to G58. 8-oxo-dGTP-binding positions include E56, E100, and W117 to D120. Residue W117 to D120 participates in 2-oxo-dATP binding.

This sequence belongs to the Nudix hydrolase family. As to quaternary structure, monomer. The cofactor is Mg(2+). High expression levels detected in thymus, liver, spleen, kidney, testis and large intestine, with lower levels detected in brain, heart, lung and stomach (at protein level). Expressed in kidney, liver and small intestine.

The protein localises to the cytoplasm. It is found in the nucleus. The protein resides in the nucleus membrane. It localises to the cytoplasmic vesicle. Its subcellular location is the secretory vesicle. The protein localises to the acrosome. It catalyses the reaction 2-oxo-dATP + H2O = 2-oxo-dAMP + diphosphate + H(+). The enzyme catalyses 2-oxo-ATP + H2O = 2-oxo-AMP + diphosphate + H(+). The catalysed reaction is 8-oxo-dGTP + H2O = 8-oxo-dGMP + diphosphate + H(+). It carries out the reaction 8-oxo-dATP + H2O = 8-oxo-dAMP + diphosphate + H(+). It catalyses the reaction O(6)-methyl-dGTP + H2O = O(6)-methyl-dGMP + diphosphate + H(+). The enzyme catalyses N(6)-methyl-dATP + H2O = N(6)-methyl-dAMP + diphosphate + H(+). The catalysed reaction is N(6)-methyl-ATP + H2O = N(6)-methyl-AMP + diphosphate + H(+). Its function is as follows. Oxidized purine nucleoside triphosphate hydrolase which is a prominent sanitizer of the oxidized nucleotide pool. Catalyzes the hydrolysis of 2-oxo-dATP (2-hydroxy-dATP) into 2-oxo-dAMP. Also has a significant hydrolase activity toward 2-oxo-ATP, 8-oxo-dGTP and 8-oxo-dATP. Through the hydrolysis of oxidized purine nucleoside triphosphates, prevents their incorporation into DNA and the subsequent transversions A:T to C:G and G:C to T:A. Also catalyzes the hydrolysis of methylated purine nucleoside triphosphate preventing their integration into DNA. Through this antimutagenic activity protects cells from oxidative stress. This is Oxidized purine nucleoside triphosphate hydrolase (Nudt1) from Mus musculus (Mouse).